We begin with the raw amino-acid sequence, 151 residues long: Ribosome maturation factor RimP (151 aa).

This sequence belongs to the RimP family.

Its subcellular location is the cytoplasm. In terms of biological role, required for maturation of 30S ribosomal subunits. This Saccharophagus degradans (strain 2-40 / ATCC 43961 / DSM 17024) protein is Ribosome maturation factor RimP.